The sequence spans 136 residues: Small ribosomal subunit protein uS9 (136 aa).

This sequence belongs to the universal ribosomal protein uS9 family.

In Borrelia duttonii (strain Ly), this protein is Small ribosomal subunit protein uS9.